Reading from the N-terminus, the 147-residue chain is Globin, major polymeric component P1 (147 aa).

The Globin domain occupies 2–146; sequence HLTADQVAAL…ISDACIAGLQ (145 aa). Residue histidine 96 coordinates heme b.

This sequence belongs to the globin family. As to quaternary structure, polymer.

This chain is Globin, major polymeric component P1, found in Glycera dibranchiata (Bloodworm).